The chain runs to 309 residues: tRNA-cytidine(32) 2-sulfurtransferase (309 aa).

A PP-loop motif motif is present at residues 45 to 50 (SGGKDS). Residues Cys-120, Cys-123, and Cys-211 each contribute to the [4Fe-4S] cluster site.

Belongs to the TtcA family. Homodimer. Mg(2+) is required as a cofactor. It depends on [4Fe-4S] cluster as a cofactor.

It is found in the cytoplasm. The enzyme catalyses cytidine(32) in tRNA + S-sulfanyl-L-cysteinyl-[cysteine desulfurase] + AH2 + ATP = 2-thiocytidine(32) in tRNA + L-cysteinyl-[cysteine desulfurase] + A + AMP + diphosphate + H(+). Its pathway is tRNA modification. In terms of biological role, catalyzes the ATP-dependent 2-thiolation of cytidine in position 32 of tRNA, to form 2-thiocytidine (s(2)C32). The sulfur atoms are provided by the cysteine/cysteine desulfurase (IscS) system. This Psychromonas ingrahamii (strain DSM 17664 / CCUG 51855 / 37) protein is tRNA-cytidine(32) 2-sulfurtransferase.